The primary structure comprises 185 residues: Translation initiation factor IF-3 (185 aa).

It belongs to the IF-3 family. As to quaternary structure, monomer.

The protein resides in the cytoplasm. IF-3 binds to the 30S ribosomal subunit and shifts the equilibrium between 70S ribosomes and their 50S and 30S subunits in favor of the free subunits, thus enhancing the availability of 30S subunits on which protein synthesis initiation begins. The protein is Translation initiation factor IF-3 of Rickettsia prowazekii (strain Madrid E).